Reading from the N-terminus, the 777-residue chain is Transcriptional regulator QRICH1 (777 aa).

The residue at position 1 (Met1) is an N-acetylmethionine. The region spanning 6–48 (ENTISFEEYIRVKARSVPQHRMKEFLDSLASKGPEALQEFQQT) is the CARD domain. 2 disordered regions span residues 140–164 (IQGQAPQSAAPSIQTPSLQSPSPSQ) and 219–240 (ALSPPPSQQGSPREGERRVGTA). A Phosphoserine modification is found at Ser346. Glycyl lysine isopeptide (Lys-Gly) (interchain with G-Cter in SUMO2) cross-links involve residues Lys354 and Lys359. Residues 420–440 (QQQPQQQTAQEQTPPPQQQQQ) form a disordered region. Ser465 carries the phosphoserine modification.

As to expression, expressed highly in prefrontal cortex, craniofacial area and near the limbs of mouse embryos. Expressed in heart, skeletal muscle, liver, kidney, lung, brain, spleen, intestine and growth plate in mice.

Its subcellular location is the nucleus. The protein resides in the cytoplasm. It is found in the cell membrane. In terms of biological role, transcriptional regulator that acts as a mediator of the integrated stress response (ISR) through transcriptional control of protein homeostasis under conditions of ER stress. Controls the outcome of the unfolded protein response (UPR), an ER-stress response pathway that either promotes recovery of ER homeostasis and cell survival, or triggers the terminal UPR which elicits programmed cell death when ER stress is prolonged and unresolved. ER stress induces QRICH1 translation by a ribosome translation re-initiation mechanism in response to EIF2S1/eIF-2-alpha phosphorylation, and stress-induced QRICH1 regulates a transcriptional program associated with protein translation, protein secretion-mediated proteotoxicity and cell death during the terminal UPR. May cooperate with ATF4 transcription factor signaling to regulate ER homeostasis which is critical for cell viability. Up-regulates CASP3/caspase-3 activity in epithelial cells under ER stress. Central regulator of proteotoxicity associated with ER stress-mediated inflammatory diseases in the intestines and liver. Involved in chondrocyte hypertrophy, a process required for normal longitudinal bone growth. The sequence is that of Transcriptional regulator QRICH1 from Mus musculus (Mouse).